Reading from the N-terminus, the 1018-residue chain is QMSAGYDDKSPAMPVPGPMGPMGPRGPPGSPGASGPQGFTGPPGEPGEAGPSGAMGPRGPAGPPGKNGEDGESGKPGRGGERGPPGPQGARGFSGLDGAKGDSGPAGPKGESGAPGENGTPGAMGPRGNDGAAGAAGPPGPTGPAGPPGFPGGPGAKGDAGAQGGRGPEGPAGARGEPGNPGPAGAAGPSGNPGTDGAAGPKGTPGAAGVAGAPGFPGPRGPSGPQGAAGAPGPKGNTGEVGAPGAKGEAGAKGEAGAPGVQGPPGPSGEEGKRGARGEPGAAGARGGPGGRGFPGSDGPAGPKGATGERGAPGAVGPKGATGEPGRTGEPGLPGAKGMTGSPGSPGPDGKTGAAGPSGQDGRPGPPGPVGARGQPGVMGFPGPKGAAGEGGKPGERGVMGPTGAAGAPGKDGDVGAPGPSGPAGPAGERXXXGPAGAPGFQGLPGPGEQGLPGEAGATGPAGARGAPGALGPAGARGSPGSSGNDGAKGDAGAPGAPGAQGPPGLQGMPGERGAAGLPGLRGDRGDQGAKGADGAPGKDGPRGLTGPLGLPGPAGATGDKGEPGPAGPVGPGGARGAPGERGESGPPGPAGFAGPPGADGQPGAKGEAGDNGAKGDAGPPGAAGPTGAPGPQGPVGNTGPKGARGAAGPPGATGFPGAAGRVGPPGPSGNPGPPGPAGGTGKEGPKGNRGETGPAGRTGEVGAAGPPGPAGEKGSPGAEGATGSAGLPGPQVGLPGQRGERXXPGLPGPAGEPGKPGPSGPGGERGPPGPMGPPGLAGAPGEPGREGSPGNEGSAGRDGAAGPKGDRGESGPSGAPGAPGPPGAPGPVGPAGKNGDRGETGPAGPAGSAGPAGPRGPAGAPGLRGDKGESGEAGERGFTGMQGPPGPSGSSGEQGPAGAAGPAGPRGPAGSAGSPGKDGMSGLPGPTGPPGPRGGFDLGFLSQPQEKAPDPFRDRDLEVDSTLKSLSQQLEQLRSPDGTRSGEYWLDPDQGCTEDALKFTYSVLEDGCTSHTGTWGK.

Positions 1-10 (QMSAGYDDKS) are enriched in basic and acidic residues. Residues 1–991 (QMSAGYDDKS…SGEYWLDPDQ (991 aa)) form a disordered region. Positions 13–30 (MPVPGPMGPMGPRGPPGS) are enriched in pro residues. Positions 31-58 (PGASGPQGFTGPPGEPGEAGPSGAMGPR) are enriched in low complexity. Over residues 67-81 (NGEDGESGKPGRGGE) the composition is skewed to basic and acidic residues. The span at 126-136 (PRGNDGAAGAA) shows a compositional bias: low complexity. The segment covering 138–151 (PPGPTGPAGPPGFP) has biased composition (pro residues). A compositionally biased stretch (gly residues) spans 152-170 (GGPGAKGDAGAQGGRGPEG). Low complexity-rich tracts occupy residues 171–214 (PAGA…AGAP) and 223–261 (SGPQ…APGV). Over residues 284–296 (GARGGPGGRGFPG) the composition is skewed to gly residues. Composition is skewed to low complexity over residues 370–385 (VGAR…PGPK), 424–442 (AGPA…PGFQ), 452–510 (LPGE…QGMP), and 543–558 (RGLT…AGAT). Positions 568–577 (GPVGPGGARG) are enriched in gly residues. Composition is skewed to low complexity over residues 591 to 627 (AGFA…AGPT) and 641 to 663 (PKGA…AGRV). The segment covering 665 to 677 (PPGPSGNPGPPGP) has biased composition (pro residues). Low complexity-rich tracts occupy residues 701–746 (EVGA…XXPG) and 775–795 (PGLA…NEGS). A compositionally biased stretch (pro residues) spans 819-829 (APGPPGAPGPV). The segment covering 843–862 (PAGPAGSAGPAGPRGPAGAP) has biased composition (low complexity). Positions 865–876 (RGDKGESGEAGE) are enriched in basic and acidic residues. The span at 889-925 (SGSSGEQGPAGAAGPAGPRGPAGSAGSPGKDGMSGLP) shows a compositional bias: low complexity. The Fibrillar collagen NC1 domain occupies 932 to 1018 (GPRGGFDLGF…CTSHTGTWGK (87 aa)). The span at 948–959 (KAPDPFRDRDLE) shows a compositional bias: basic and acidic residues. The segment covering 963–973 (TLKSLSQQLEQ) has biased composition (polar residues).

The protein belongs to the fibrillar collagen family.

The protein localises to the secreted. Its subcellular location is the extracellular space. The protein resides in the extracellular matrix. The sequence is that of Collagen, type I, alpha 1a from Epinephelus costae (Goldblotch grouper).